A 206-amino-acid polypeptide reads, in one-letter code: Small ribosomal subunit protein uS4 (206 aa).

The region spanning 96-157 (QRLDNVVYRM…KAKKQARIGA (62 aa)) is the S4 RNA-binding domain.

This sequence belongs to the universal ribosomal protein uS4 family. In terms of assembly, part of the 30S ribosomal subunit. Contacts protein S5. The interaction surface between S4 and S5 is involved in control of translational fidelity.

Functionally, one of the primary rRNA binding proteins, it binds directly to 16S rRNA where it nucleates assembly of the body of the 30S subunit. Its function is as follows. With S5 and S12 plays an important role in translational accuracy. The protein is Small ribosomal subunit protein uS4 of Idiomarina loihiensis (strain ATCC BAA-735 / DSM 15497 / L2-TR).